A 111-amino-acid polypeptide reads, in one-letter code: Large ribosomal subunit protein uL22 (111 aa).

The protein belongs to the universal ribosomal protein uL22 family. As to quaternary structure, part of the 50S ribosomal subunit.

In terms of biological role, this protein binds specifically to 23S rRNA; its binding is stimulated by other ribosomal proteins, e.g. L4, L17, and L20. It is important during the early stages of 50S assembly. It makes multiple contacts with different domains of the 23S rRNA in the assembled 50S subunit and ribosome. The globular domain of the protein is located near the polypeptide exit tunnel on the outside of the subunit, while an extended beta-hairpin is found that lines the wall of the exit tunnel in the center of the 70S ribosome. The protein is Large ribosomal subunit protein uL22 of Clostridium perfringens (strain ATCC 13124 / DSM 756 / JCM 1290 / NCIMB 6125 / NCTC 8237 / Type A).